The sequence spans 288 residues: MNYKLKTRSGWLDEYHQGVRYGLEGKLILEESSPFQKITIYESKRYGKALLLDDCWMTAEKSEKCYHECLIHPALCCSTRIDNILIIGGGDGGSARECLKYKEVKSIDLVEIDLRVIELSQKYLPTIGGNAWSDSRLNLQIKNGIDWVKHTKENSYDVIIIDGADPIGPSKELFSNSFLKDCKRILKPGGVLATQSESPESFQEIHINIVKILREIFDYADPMYGSVSIYPSGLWSWAFASMENPKYIYPKKSRVKEISENCQVWSERWQQGAFNTIPAFIERELAKI.

The PABS domain occupies 9–242; it reads SGWLDEYHQG…GLWSWAFASM (234 aa). Q36 is an S-methyl-5'-thioadenosine binding site. Spermidine-binding residues include H67 and D91. S-methyl-5'-thioadenosine contacts are provided by residues E111 and 143–144; that span reads NG. D162 functions as the Proton acceptor in the catalytic mechanism. P169 provides a ligand contact to S-methyl-5'-thioadenosine.

This sequence belongs to the spermidine/spermine synthase family. As to quaternary structure, homodimer or homotetramer.

Its subcellular location is the cytoplasm. It carries out the reaction S-adenosyl 3-(methylsulfanyl)propylamine + putrescine = S-methyl-5'-thioadenosine + spermidine + H(+). It functions in the pathway amine and polyamine biosynthesis; spermidine biosynthesis; spermidine from putrescine: step 1/1. Its function is as follows. Catalyzes the irreversible transfer of a propylamine group from the amino donor S-adenosylmethioninamine (decarboxy-AdoMet) to putrescine (1,4-diaminobutane) to yield spermidine. In Prochlorococcus marinus (strain NATL1A), this protein is Polyamine aminopropyltransferase.